The chain runs to 89 residues: Small ribosomal subunit protein uS15 (89 aa).

Belongs to the universal ribosomal protein uS15 family. Part of the 30S ribosomal subunit. Forms a bridge to the 50S subunit in the 70S ribosome, contacting the 23S rRNA.

One of the primary rRNA binding proteins, it binds directly to 16S rRNA where it helps nucleate assembly of the platform of the 30S subunit by binding and bridging several RNA helices of the 16S rRNA. In terms of biological role, forms an intersubunit bridge (bridge B4) with the 23S rRNA of the 50S subunit in the ribosome. This is Small ribosomal subunit protein uS15 from Cupriavidus metallidurans (strain ATCC 43123 / DSM 2839 / NBRC 102507 / CH34) (Ralstonia metallidurans).